The following is a 347-amino-acid chain: Palmitoyltransferase ZDHHC19 (347 aa).

Helical transmembrane passes span 29–49 (VFAA…FGFP) and 59–79 (WAFP…LVSL). The 51-residue stretch at 112 to 162 (EWCPKCLFHRPPRTYHCPWCNICVEDFDHHCKWVNNCIGHRNFRLFMLLVL) folds into the DHHC domain. Cysteine 142 serves as the catalytic S-palmitoyl cysteine intermediate. The next 2 helical transmembrane spans lie at 156 to 176 (LFML…VTCL) and 194 to 214 (AILV…LLLI). The tract at residues 275–347 (IQEKTKPSPP…PTAEPAAGDP (73 aa)) is disordered.

Belongs to the DHHC palmitoyltransferase family.

It is found in the golgi apparatus membrane. The protein resides in the cytoplasm. It localises to the perinuclear region. It catalyses the reaction L-cysteinyl-[protein] + hexadecanoyl-CoA = S-hexadecanoyl-L-cysteinyl-[protein] + CoA. Palmitoyltransferase that mediates palmitoylation oproteins, such as RRAS and SQSTM1. Catalyzes palmitoylation of RRAS, leading to increased cell viability. Acts as a positive regulator of autophagy by mediating palmitoylation of SQSTM1, promoting affinity between SQSTM1 and ATG8 proteins and recruitment of ubiquitinated cargo proteins to autophagosomes. This Mus musculus (Mouse) protein is Palmitoyltransferase ZDHHC19 (Zdhhc19).